The sequence spans 309 residues: Foldase protein PrsA (309 aa).

The N-terminal stretch at 1–20 is a signal peptide; the sequence is MKKKIVAGAVTLLSVAVLAA. C21 carries the N-palmitoyl cysteine lipid modification. C21 carries S-diacylglycerol cysteine lipidation. Positions 144–241 constitute a PpiC domain; it reads TPEVTAQIIK…ASYYIVKLVS (98 aa).

The protein belongs to the PrsA family.

Its subcellular location is the cell membrane. The enzyme catalyses [protein]-peptidylproline (omega=180) = [protein]-peptidylproline (omega=0). Functionally, plays a major role in protein secretion by helping the post-translocational extracellular folding of several secreted proteins. The protein is Foldase protein PrsA of Streptococcus gordonii (strain Challis / ATCC 35105 / BCRC 15272 / CH1 / DL1 / V288).